We begin with the raw amino-acid sequence, 175 residues long: Sec-independent protein translocase protein TatB (175 aa).

The chain crosses the membrane as a helical span at residues 1-21 (MFDIGWSELVLIGVVALIAIG). Disordered stretches follow at residues 100 to 132 (KPAETSSTTAIEAPATSSEALTTPTTPEAPTPE) and 155 to 175 (QAPVVAQDTAPSEAIKDAKAS). Residues 111–132 (EAPATSSEALTTPTTPEAPTPE) are compositionally biased toward low complexity.

Belongs to the TatB family. The Tat system comprises two distinct complexes: a TatABC complex, containing multiple copies of TatA, TatB and TatC subunits, and a separate TatA complex, containing only TatA subunits. Substrates initially bind to the TatABC complex, which probably triggers association of the separate TatA complex to form the active translocon.

The protein localises to the cell inner membrane. Part of the twin-arginine translocation (Tat) system that transports large folded proteins containing a characteristic twin-arginine motif in their signal peptide across membranes. Together with TatC, TatB is part of a receptor directly interacting with Tat signal peptides. TatB may form an oligomeric binding site that transiently accommodates folded Tat precursor proteins before their translocation. The protein is Sec-independent protein translocase protein TatB of Bradyrhizobium diazoefficiens (strain JCM 10833 / BCRC 13528 / IAM 13628 / NBRC 14792 / USDA 110).